We begin with the raw amino-acid sequence, 147 residues long: Angiogenin (147 aa).

Residues 1 to 24 (MVMGLGVLLLVFVLGLGLTPPTLA) form the signal peptide. Q25 is modified (pyrrolidone carboxylic acid). The active-site Proton acceptor is H37. R45 and D46 together coordinate tRNA. 3 cysteine pairs are disulfide-bonded: C50-C105, C63-C116, and C81-C131. Residues 55–59 (RRRGL) carry the Nucleolar localization signal motif. Residues C105 and V127 each contribute to the tRNA site. H138 acts as the Proton donor in catalysis.

The protein belongs to the pancreatic ribonuclease family. As to quaternary structure, homodimer. Interacts with RNH1; inhibiting ANG ribonuclease activity. Interacts with PCNA.

It is found in the secreted. Its subcellular location is the nucleus. It localises to the nucleolus. The protein resides in the cytoplasm. The protein localises to the stress granule. Has weak tRNA ribonuclease activity by itself due to partial autoinhibition by its C-terminus, which folds into a short alpha-helix that partially occludes the substrate-binding site. In absence of stress, the ribonuclease activity is inhibited by RNH1 in the cytoplasm. In response to stress, dissociates from RNH1 in the cytoplasm and associates with cytoplasmic ribosomes with vacant A-sites: ribosomes directly activate the tRNA ribonuclease activity of ANG by refolding the C-terminal alpha-helix. In response to stress, the angiogenic activity of ANG is inhibited by RNH1 in the nucleus. In terms of biological role, secreted ribonuclease that can either promote or restrict cell proliferation of target cells, depending on the context. Endocytosed in target cells via its receptor PLXNB2 and translocates to the cytoplasm or nucleus. Under stress conditions, localizes to the cytoplasm and promotes the assembly of stress granules (SGs): specifically cleaves a subset of tRNAs within anticodon loops to produce tRNA-derived stress-induced fragments (tiRNAs), resulting in translation repression and inhibition of cell proliferation. tiRNas also prevent formation of apoptosome, thereby promoting cell survival. Preferentially cleaves RNAs between a pyrimidine and an adenosine residue, suggesting that it cleaves the anticodon loop of tRNA(Ala) (32-UUAGCAU-38) after positions 33 and 36. Cleaves a subset of tRNAs, including tRNA(Ala), tRNA(Glu), tRNA(Gly), tRNA(Lys), tRNA(Val), tRNA(His), tRNA(Asp) and tRNA(Sec). Under growth conditions and in differentiated cells, translocates to the nucleus and stimulates ribosomal RNA (rRNA) transcription, including that containing the initiation site sequences of 45S rRNA, thereby promoting cell growth and proliferation. Angiogenin induces vascularization of normal and malignant tissues via its ability to promote rRNA transcription. Involved in hematopoietic stem and progenitor cell (HSPC) growth and survival by promoting rRNA transcription in growth conditions and inhibiting translation in response to stress, respectively. Mediates the crosstalk between myeloid and intestinal epithelial cells to protect the intestinal epithelial barrier integrity: secreted by myeloid cells and promotes intestinal epithelial cells proliferation and survival. Also mediates osteoclast-endothelial cell crosstalk in growing bone: produced by osteoclasts and protects the neighboring vascular cells against senescence by promoting rRNA transcription. The polypeptide is Angiogenin (ANG) (Pan troglodytes (Chimpanzee)).